The chain runs to 706 residues: ATP-dependent zinc metalloprotease FtsH (706 aa).

Residues 1-17 show a composition bias toward polar residues; that stretch reads MAKNSLKPSNPYNSEPE. A disordered region spans residues 1–20; the sequence is MAKNSLKPSNPYNSEPETPQ. The Cytoplasmic portion of the chain corresponds to 1–24; that stretch reads MAKNSLKPSNPYNSEPETPQPRPK. A helical transmembrane segment spans residues 25–45; the sequence is LPMIYYVVVIALLIGLQLAFF. The Periplasmic portion of the chain corresponds to 46–142; that stretch reads WSGSSREIPY…RYEGSPGTTW (97 aa). The segment at 88–111 is disordered; that stretch reads GLPKQEEGNDTTRKLLPGAKTPEN. A compositionally biased stretch (basic and acidic residues) spans 91–100; that stretch reads KQEEGNDTTR. Residues 143 to 163 traverse the membrane as a helical segment; sequence ISELIQWVLPFALLFGLYFFI. Topologically, residues 164-706 are cytoplasmic; sequence FRRMGAGGPG…LRQSRNVSDN (543 aa). 239–246 contributes to the ATP binding site; it reads GPPGTGKT. Residue His462 participates in Zn(2+) binding. Residue Glu463 is part of the active site. Zn(2+)-binding residues include His466 and Asp539. Positions 641–681 are disordered; the sequence is RPGGQEEDSGEVDCSKKSAENGMVAHEPETTADAESTEKVG.

The protein in the central section; belongs to the AAA ATPase family. This sequence in the C-terminal section; belongs to the peptidase M41 family. As to quaternary structure, homohexamer. It depends on Zn(2+) as a cofactor.

It localises to the cell inner membrane. Functionally, acts as a processive, ATP-dependent zinc metallopeptidase for both cytoplasmic and membrane proteins. Plays a role in the quality control of integral membrane proteins. This is ATP-dependent zinc metalloprotease FtsH from Chlorobium luteolum (strain DSM 273 / BCRC 81028 / 2530) (Pelodictyon luteolum).